A 298-amino-acid chain; its full sequence is Probable GTP 3',8-cyclase (298 aa).

The 224-residue stretch at 4-227 folds into the Radical SAM core domain; the sequence is RYGREIRSFR…MQNRKKYLID (224 aa). Arg-13 provides a ligand contact to GTP. Residues Cys-20 and Cys-24 each contribute to the [4Fe-4S] cluster site. Tyr-26 lines the S-adenosyl-L-methionine pocket. Cys-27 is a binding site for [4Fe-4S] cluster. Lys-61 is a GTP binding site. Gly-65 provides a ligand contact to S-adenosyl-L-methionine. Residue Thr-91 participates in GTP binding. Residue Ser-115 coordinates S-adenosyl-L-methionine. A GTP-binding site is contributed by Lys-152. [4Fe-4S] cluster is bound by residues Cys-243 and Cys-246. Residue 248–250 participates in GTP binding; it reads RIR. Cys-260 serves as a coordination point for [4Fe-4S] cluster.

This sequence belongs to the radical SAM superfamily. MoaA family. Requires [4Fe-4S] cluster as cofactor.

It catalyses the reaction GTP + AH2 + S-adenosyl-L-methionine = (8S)-3',8-cyclo-7,8-dihydroguanosine 5'-triphosphate + 5'-deoxyadenosine + L-methionine + A + H(+). It participates in cofactor biosynthesis; molybdopterin biosynthesis. Functionally, catalyzes the cyclization of GTP to (8S)-3',8-cyclo-7,8-dihydroguanosine 5'-triphosphate. This Methanococcus maripaludis (strain C5 / ATCC BAA-1333) protein is Probable GTP 3',8-cyclase.